We begin with the raw amino-acid sequence, 334 residues long: DGAT1/2-independent enzyme synthesizing storage lipids (334 aa).

The Lumenal portion of the chain corresponds to 1–50; it reads MTNKNQSFGVGQDSMSSMTCLIHVLEAWFGVEHLEDYWNFANYLLWVFTP. A glycan (N-linked (GlcNAc...) asparagine) is linked at N5. The chain crosses the membrane as a helical span at residues 51-71; that stretch reads LLLLILPYFTIFLLYLTIIFL. Topologically, residues 72-125 are cytoplasmic; that stretch reads HIYKRKNVLKEAYSHNLWDGARKTVATLWDGHAAVWHGYEVHGMEKIPEEGPAL. Residues 126–146 form a helical membrane-spanning segment; that stretch reads IIFYHGAIPIDFYYFMAKIFI. H130 is a catalytic residue. Over 147 to 334 the chain is Lumenal; sequence HKGRTCRVVA…NKQKINQKTL (188 aa).

Belongs to the diacylglycerol acyltransferase family. Highly divergent.

The protein resides in the endoplasmic reticulum membrane. It catalyses the reaction a 1,2-diacylglycerol + a 1,2-diacyl-sn-glycero-3-phosphocholine = a triacylglycerol + a 1-acyl-sn-glycero-3-phosphocholine. The catalysed reaction is a 1-O-alkyl-2-acyl-sn-glycero-3-phosphocholine + a 1,2-diacylglycerol = a 1-O-alkyl-sn-glycero-3-phosphocholine + a triacylglycerol. It carries out the reaction a 2-acylglycerol + an acyl-CoA = a 1,2-diacylglycerol + CoA. The enzyme catalyses an acyl-CoA + a 1,2-diacyl-sn-glycerol = a triacyl-sn-glycerol + CoA. It catalyses the reaction 2-(9Z-octadecenoyl)-glycerol + (9Z)-octadecenoyl-CoA = 1,2-di-(9Z-octadecenoyl)-glycerol + CoA. The catalysed reaction is 1,2-di-(9Z-octadecenoyl)-sn-glycerol + (9Z)-octadecenoyl-CoA = 1,2,3-tri-(9Z-octadecenoyl)-glycerol + CoA. Its activity is regulated as follows. Acyltransferase activity is specifically inhibited by TMX1 at the endoplasmic reticulum, restricting accumulation of triacylglycerol. Catalytic subunit of the alternative triglyceride biosynthesis pathway, which mediates formation of triacylglycerol from diacylglycerol and membrane phospholipids. Synthesizes triacylglycerol at the expense of membrane phospholipids, such as phosphatidylcholine (PC) and its ether-linked form (ePC), thereby altering the composition of membranes. The alternative triglyceride biosynthesis pathway is probably required to provide the energy required for rapid growth when fuel sources are limiting. It maintains mitochondrial function during periods of extracellular lipid starvation. Can also use acyl-CoA as donor: acts as a acyl-CoA:monoacylglycerol acyltransferase (MGAT), but also shows acyl-CoA:diacylglycerol acyltransferase (DGAT) activity. The protein is DGAT1/2-independent enzyme synthesizing storage lipids (TMEM68) of Bos taurus (Bovine).